Consider the following 206-residue polypeptide: Large ribosomal subunit protein uL4 (206 aa).

A disordered region spans residues 47–76 (GTQSAKTRAEVSGGGIKPWRQKGTGRARQG).

The protein belongs to the universal ribosomal protein uL4 family. Part of the 50S ribosomal subunit.

Functionally, one of the primary rRNA binding proteins, this protein initially binds near the 5'-end of the 23S rRNA. It is important during the early stages of 50S assembly. It makes multiple contacts with different domains of the 23S rRNA in the assembled 50S subunit and ribosome. In terms of biological role, forms part of the polypeptide exit tunnel. The sequence is that of Large ribosomal subunit protein uL4 from Clostridium botulinum (strain Okra / Type B1).